Reading from the N-terminus, the 500-residue chain is MTIFDNYEVWFVIGSQHLYGAETLRQVTQHAEHVVNALNTEAKLPCKLVLKPLGTSPDEITAICRDANYDDRCAGLVVWLHTFSPAKMWINGLSILNKPLLQFHTQFNAALPWDSIDMDFMNLNQTAHGGREFGFIGARMRQQHAVVTGHWQDKEAHTRIGAWMRQAVSKQDTRQLKVCRFGDNMREVAVTDGDKVAAQIKFGFSVNTWAVGDLVQVVNSIGDGDISALIDEYESSYTLTPATQIHGDKRQNVREAARIELGMKRFLEQGGFHAFTTTFEDLHGLKQLPGLAVQRLMQQGYGFAGEGDWKTAALLRIMKVMSTGLQGGTSFMEDYTDHFEKGNDLVLGSHMLEVCPSIAVEEKPILDVQHLGIGGKEDPARLIFNTQTGPAIVASLIDLGDRYRLLVNCIDTVKTPHSLPKLPVANALWKAQPDLPTASEAWILAGGAHHTVFSHALDLNDMRQFAEIHDIEIAVIDNDTRLPAFKDALRWNEVYYGLKR.

4 residues coordinate Mn(2+): glutamate 306, glutamate 333, histidine 350, and histidine 450.

This sequence belongs to the arabinose isomerase family. As to quaternary structure, homohexamer. Mn(2+) is required as a cofactor.

It carries out the reaction beta-L-arabinopyranose = L-ribulose. It participates in carbohydrate degradation; L-arabinose degradation via L-ribulose; D-xylulose 5-phosphate from L-arabinose (bacterial route): step 1/3. In terms of biological role, catalyzes the conversion of L-arabinose to L-ribulose. This Salmonella typhi protein is L-arabinose isomerase.